We begin with the raw amino-acid sequence, 171 residues long: Peptide deformylase (171 aa).

Residues cysteine 94 and histidine 136 each contribute to the Fe cation site. The active site involves glutamate 137. Histidine 140 serves as a coordination point for Fe cation.

The protein belongs to the polypeptide deformylase family. The cofactor is Fe(2+).

It carries out the reaction N-terminal N-formyl-L-methionyl-[peptide] + H2O = N-terminal L-methionyl-[peptide] + formate. Its function is as follows. Removes the formyl group from the N-terminal Met of newly synthesized proteins. Requires at least a dipeptide for an efficient rate of reaction. N-terminal L-methionine is a prerequisite for activity but the enzyme has broad specificity at other positions. The protein is Peptide deformylase of Afipia carboxidovorans (strain ATCC 49405 / DSM 1227 / KCTC 32145 / OM5) (Oligotropha carboxidovorans).